Consider the following 937-residue polypeptide: Putative leucine-rich repeat receptor-like serine/threonine-protein kinase At3g53590 (937 aa).

Positions 1 to 20 (MIPPNINVLIRSICINLVTS) are cleaved as a signal peptide. Over 21-547 (LPLNFAYIFI…LLAQTSGIRT (527 aa)) the chain is Extracellular. 4 N-linked (GlcNAc...) asparagine glycosylation sites follow: Asn-50, Asn-63, Asn-90, and Asn-114. LRR repeat units lie at residues 102–126 (LLYL…IGRI), 127–150 (SSLK…LGNL), 152–173 (NLNR…SFGN), 174–198 (LRSI…LSKL), 200–222 (KLVH…LAQL), 223–249 (PSLT…HFSR), 251–270 (VKLS…LSRI), and 271–294 (ENLS…KLSD). Asn-162, Asn-184, and Asn-210 each carry an N-linked (GlcNAc...) asparagine glycan. 2 N-linked (GlcNAc...) asparagine glycosylation sites follow: Asn-272 and Asn-295. 3 LRR repeats span residues 296 to 316 (MTTI…SFSD), 317 to 341 (LNSL…IWQD), and 343 to 360 (SFEN…NFSD). 6 N-linked (GlcNAc...) asparagine glycosylation sites follow: Asn-327, Asn-357, Asn-370, Asn-413, Asn-499, and Asn-516. Residues 548-568 (IVWMMIVAGSVVAATVLSVTA) form a helical membrane-spanning segment. Residues 569–937 (TLLYVRKRRE…SGFFHAVKPR (369 aa)) lie on the Cytoplasmic side of the membrane. The region spanning 614–886 (FDSSTLIGRG…SKVVKELEGI (273 aa)) is the Protein kinase domain. ATP-binding positions include 620 to 628 (IGRGSYGKV) and Lys-642. Catalysis depends on Asp-738, which acts as the Proton acceptor.

The protein belongs to the protein kinase superfamily. Ser/Thr protein kinase family.

The protein localises to the cell membrane. It carries out the reaction L-seryl-[protein] + ATP = O-phospho-L-seryl-[protein] + ADP + H(+). It catalyses the reaction L-threonyl-[protein] + ATP = O-phospho-L-threonyl-[protein] + ADP + H(+). This chain is Putative leucine-rich repeat receptor-like serine/threonine-protein kinase At3g53590, found in Arabidopsis thaliana (Mouse-ear cress).